A 122-amino-acid chain; its full sequence is NADH-quinone oxidoreductase subunit A (122 aa).

3 helical membrane-spanning segments follow: residues methionine 10–glycine 30, isoleucine 66–valine 86, and leucine 91–alanine 111.

Belongs to the complex I subunit 3 family. NDH-1 is composed of 14 different subunits. Subunits NuoA, H, J, K, L, M, N constitute the membrane sector of the complex.

The protein localises to the cell membrane. It catalyses the reaction a quinone + NADH + 5 H(+)(in) = a quinol + NAD(+) + 4 H(+)(out). Functionally, NDH-1 shuttles electrons from NADH, via FMN and iron-sulfur (Fe-S) centers, to quinones in the respiratory chain. The immediate electron acceptor for the enzyme in this species is believed to be a menaquinone. Couples the redox reaction to proton translocation (for every two electrons transferred, four hydrogen ions are translocated across the cytoplasmic membrane), and thus conserves the redox energy in a proton gradient. In Bacillus thuringiensis subsp. konkukian (strain 97-27), this protein is NADH-quinone oxidoreductase subunit A.